The following is a 203-amino-acid chain: uncharacterized protein (203 aa).

Positions 1–23 are disordered; that stretch reads MGSSFVIDRSSSSPAPPRGPAPK.

This is an uncharacterized protein from Saccharomyces cerevisiae (strain ATCC 204508 / S288c) (Baker's yeast).